We begin with the raw amino-acid sequence, 274 residues long: Penicillin-insensitive murein endopeptidase (274 aa).

Residues 1 to 19 (MKKTAIALLAWFVSSASLA) form the signal peptide. Intrachain disulfides connect C44–C265, C187–C235, and C216–C223. Residues H110, H113, D120, D147, and H150 each contribute to the Zn(2+) site. The segment at 225–274 (DQPLPPPGDGCGAELQSWFEPPKPGTTKPEKKTPPPLPPSCQALLDEHVL) is disordered.

Belongs to the peptidase M74 family. Dimer. It depends on Zn(2+) as a cofactor.

It is found in the periplasm. Its function is as follows. Murein endopeptidase that cleaves the D-alanyl-meso-2,6-diamino-pimelyl amide bond that connects peptidoglycan strands. Likely plays a role in the removal of murein from the sacculus. The protein is Penicillin-insensitive murein endopeptidase of Salmonella paratyphi A (strain ATCC 9150 / SARB42).